Reading from the N-terminus, the 90-residue chain is MAVKIRLTRMGSKKKPFYRINVADSRAPRDGRFIETVGTYNPLVEENQVTLKEERVLEWLSKGAQPSDTVRNILSKEGVMKKFHESKFSK.

The protein belongs to the bacterial ribosomal protein bS16 family.

The protein is Small ribosomal subunit protein bS16 of Streptococcus thermophilus (strain CNRZ 1066).